A 430-amino-acid polypeptide reads, in one-letter code: MKLKINSQGLKGRLKVPGDKSISHRSIMFGSIAKGKTVIYDILRGEDVLSTIEAFRAMGVEIEDKGEVITVHGKGISELKAPEKALDMGNSGTSTRLLSGILAGLPFETTLFGDDSLSKRPMDRVATPLQLMGAEITGQTDKVKLPMTIKGSTHLKAIDYVLPVASAQVKSAVIFAALQAEGLTKVVEKEKTRSHTEEMLVQFGGELKVSDKTILVPGGQKLVGQKVVVPGDISSAAFWLVAALVVENSELILENVGVNETRTGIIEVIQAMGGQLEILEQDNVAKAATLKVKASQLKGTEISGDLIPRLIDELPIIALLATQAQGQTIIRDAAELKVKETDRIAVVANALNSMGAKIQPTDDGMIIQGGTKLHAPENSINTLGDHRIGMMAAIAALLVKNGEIELERAEAIQTSYPSFFDDLEQLSENI.

3-phosphoshikimate is bound by residues K20, S21, and R25. K20 contacts phosphoenolpyruvate. Phosphoenolpyruvate contacts are provided by G92 and R120. 3-phosphoshikimate contacts are provided by S166, Q168, D312, and K339. Position 168 (Q168) interacts with phosphoenolpyruvate. Catalysis depends on D312, which acts as the Proton acceptor. 2 residues coordinate phosphoenolpyruvate: R343 and R387.

It belongs to the EPSP synthase family. Monomer.

It is found in the cytoplasm. The catalysed reaction is 3-phosphoshikimate + phosphoenolpyruvate = 5-O-(1-carboxyvinyl)-3-phosphoshikimate + phosphate. It functions in the pathway metabolic intermediate biosynthesis; chorismate biosynthesis; chorismate from D-erythrose 4-phosphate and phosphoenolpyruvate: step 6/7. In terms of biological role, catalyzes the transfer of the enolpyruvyl moiety of phosphoenolpyruvate (PEP) to the 5-hydroxyl of shikimate-3-phosphate (S3P) to produce enolpyruvyl shikimate-3-phosphate and inorganic phosphate. The polypeptide is 3-phosphoshikimate 1-carboxyvinyltransferase (Lactococcus lactis subsp. lactis (strain IL1403) (Streptococcus lactis)).